The following is a 264-amino-acid chain: Proliferating cell nuclear antigen 2 (264 aa).

Belongs to the PCNA family. As to quaternary structure, homotrimer. Oligomer. Interacts with ORC1 (via PIP-box motif). Interacts with FEN1.

The protein localises to the nucleus. The protein resides in the chromosome. It is found in the cytoplasm. Its function is as follows. May be involved in DNA damage response. Appears not to be involved in DNA replication in trophozoites. The protein is Proliferating cell nuclear antigen 2 of Plasmodium falciparum (isolate 3D7).